Consider the following 122-residue polypeptide: Large ribosomal subunit protein uL18 (122 aa).

Belongs to the universal ribosomal protein uL18 family. In terms of assembly, part of the 50S ribosomal subunit; part of the 5S rRNA/L5/L18/L25 subcomplex. Contacts the 5S and 23S rRNAs.

Functionally, this is one of the proteins that bind and probably mediate the attachment of the 5S RNA into the large ribosomal subunit, where it forms part of the central protuberance. The sequence is that of Large ribosomal subunit protein uL18 from Hydrogenobaculum sp. (strain Y04AAS1).